We begin with the raw amino-acid sequence, 178 residues long: MSMNSNVYVAKLGKTVGLQGHLRLFIDSDFPEQFKKGVTFTTNRNLQLKVLEYNSSRELVKFENYEDVELAKKLTNQELYATIEQTKENCKLAKNEFFWFDLISCEVFENNLKLGTVKEIHRYPLNDYLEIITDSELVKKALPKNFLIPHIFDKFILNIDIENKRIDVINSFDILENS.

The region spanning 94–174 is the PRC barrel domain; it reads KNEFFWFDLI…RIDVINSFDI (81 aa).

This sequence belongs to the RimM family. As to quaternary structure, binds ribosomal protein uS19.

Its subcellular location is the cytoplasm. Functionally, an accessory protein needed during the final step in the assembly of 30S ribosomal subunit, possibly for assembly of the head region. Essential for efficient processing of 16S rRNA. May be needed both before and after RbfA during the maturation of 16S rRNA. It has affinity for free ribosomal 30S subunits but not for 70S ribosomes. This chain is Ribosome maturation factor RimM, found in Aliarcobacter butzleri (strain RM4018) (Arcobacter butzleri).